The primary structure comprises 376 residues: Lipoprotein p33 (376 aa).

A signal peptide spans 1 to 30 (MKIKKIKLLKALALTGAFGIVATVPVIVYS). Cys-31 is lipidated: N-palmitoyl cysteine. Cys-31 is lipidated: S-diacylglycerol cysteine. A disordered region spans residues 35–59 (DNNGGTGDNNTGGGGSGTDQQQGTT). Residues 38–51 (GGTGDNNTGGGGSG) show a composition bias toward gly residues.

The protein belongs to the p35 lipoprotein family.

It localises to the cell membrane. The protein is Lipoprotein p33 of Malacoplasma penetrans (Mycoplasma penetrans).